A 426-amino-acid chain; its full sequence is 3-phosphoshikimate 1-carboxyvinyltransferase (426 aa).

3-phosphoshikimate is bound by residues Lys22, Ser23, and Arg27. Lys22 is a phosphoenolpyruvate binding site. Phosphoenolpyruvate-binding residues include Gly96 and Arg124. 7 residues coordinate 3-phosphoshikimate: Ser170, Ser171, Gln172, Ser198, Asp314, Asn337, and Lys341. Phosphoenolpyruvate is bound at residue Gln172. Asp314 (proton acceptor) is an active-site residue. Residues Arg345, Arg387, and Lys412 each contribute to the phosphoenolpyruvate site.

It belongs to the EPSP synthase family. In terms of assembly, monomer.

It is found in the cytoplasm. The catalysed reaction is 3-phosphoshikimate + phosphoenolpyruvate = 5-O-(1-carboxyvinyl)-3-phosphoshikimate + phosphate. Its pathway is metabolic intermediate biosynthesis; chorismate biosynthesis; chorismate from D-erythrose 4-phosphate and phosphoenolpyruvate: step 6/7. Its function is as follows. Catalyzes the transfer of the enolpyruvyl moiety of phosphoenolpyruvate (PEP) to the 5-hydroxyl of shikimate-3-phosphate (S3P) to produce enolpyruvyl shikimate-3-phosphate and inorganic phosphate. The protein is 3-phosphoshikimate 1-carboxyvinyltransferase of Shewanella baltica (strain OS195).